Here is a 336-residue protein sequence, read N- to C-terminus: 4-hydroxythreonine-4-phosphate dehydrogenase (336 aa).

Substrate is bound at residue Thr-140. Residues His-171, His-216, and His-271 each contribute to the a divalent metal cation site. Substrate contacts are provided by Lys-279, Asn-288, and Arg-297.

Belongs to the PdxA family. As to quaternary structure, homodimer. Zn(2+) is required as a cofactor. Requires Mg(2+) as cofactor. It depends on Co(2+) as a cofactor.

It is found in the cytoplasm. It carries out the reaction 4-(phosphooxy)-L-threonine + NAD(+) = 3-amino-2-oxopropyl phosphate + CO2 + NADH. It functions in the pathway cofactor biosynthesis; pyridoxine 5'-phosphate biosynthesis; pyridoxine 5'-phosphate from D-erythrose 4-phosphate: step 4/5. In terms of biological role, catalyzes the NAD(P)-dependent oxidation of 4-(phosphooxy)-L-threonine (HTP) into 2-amino-3-oxo-4-(phosphooxy)butyric acid which spontaneously decarboxylates to form 3-amino-2-oxopropyl phosphate (AHAP). In Erythrobacter litoralis (strain HTCC2594), this protein is 4-hydroxythreonine-4-phosphate dehydrogenase.